The sequence spans 492 residues: N-succinylglutamate 5-semialdehyde dehydrogenase (492 aa).

225–230 (GSSNTG) contacts NAD(+). Residues E248 and C282 contribute to the active site.

Belongs to the aldehyde dehydrogenase family. AstD subfamily.

It carries out the reaction N-succinyl-L-glutamate 5-semialdehyde + NAD(+) + H2O = N-succinyl-L-glutamate + NADH + 2 H(+). Its pathway is amino-acid degradation; L-arginine degradation via AST pathway; L-glutamate and succinate from L-arginine: step 4/5. Functionally, catalyzes the NAD-dependent reduction of succinylglutamate semialdehyde into succinylglutamate. The chain is N-succinylglutamate 5-semialdehyde dehydrogenase from Colwellia psychrerythraea (strain 34H / ATCC BAA-681) (Vibrio psychroerythus).